Reading from the N-terminus, the 261-residue chain is 5-hmdU DNA kinase (261 aa).

Belongs to the thymidylate kinase family. 5-hmdU DNA kinase subfamily.

It carries out the reaction 5-hydroxymethyl-dUMP in DNA + ATP = 5-phosphomethyl-dUMP in DNA + ADP + H(+). In terms of biological role, phosphorylates 5-hydroxymethyluracil (5hmdU) into 5-phosphomethyl-2'-deoxyuridine (5- PmdU) on DNA as a step in the pathway leading to thymidine hypermodifications in the viral genome. As a final result of the pathway of hypermodification, 5-Nalpha-putrescinylthymidine (Nalpha-PutT) substitutes for about 50% of thymidines in the viral DNA. These modifications probably prevent degradation of viral genome by the host restriction-modification antiviral defense system. In Delftia phage PhiW-14 (Deftia acidovorans bacteriophage phiW-14), this protein is 5-hmdU DNA kinase.